Consider the following 437-residue polypeptide: Arginine biosynthesis bifunctional protein ArgJ, mitochondrial (437 aa).

Residues threonine 173, lysine 200, threonine 211, glutamate 297, asparagine 432, and serine 437 each coordinate substrate. The active-site Nucleophile is threonine 211.

The protein belongs to the ArgJ family. As to quaternary structure, heterodimer of an alpha and a beta chain. The alpha and beta chains are autoproteolytically processed from a single precursor protein within the mitochondrion.

It localises to the mitochondrion matrix. The catalysed reaction is N(2)-acetyl-L-ornithine + L-glutamate = N-acetyl-L-glutamate + L-ornithine. It carries out the reaction L-glutamate + acetyl-CoA = N-acetyl-L-glutamate + CoA + H(+). Its pathway is amino-acid biosynthesis; L-arginine biosynthesis; L-ornithine and N-acetyl-L-glutamate from L-glutamate and N(2)-acetyl-L-ornithine (cyclic): step 1/1. It functions in the pathway amino-acid biosynthesis; L-arginine biosynthesis; N(2)-acetyl-L-ornithine from L-glutamate: step 1/4. Functionally, catalyzes two activities which are involved in the cyclic version of arginine biosynthesis: the synthesis of acetylglutamate from glutamate and acetyl-CoA, and of ornithine by transacetylation between acetylornithine and glutamate. The sequence is that of Arginine biosynthesis bifunctional protein ArgJ, mitochondrial from Zygosaccharomyces rouxii (strain ATCC 2623 / CBS 732 / NBRC 1130 / NCYC 568 / NRRL Y-229).